The following is a 529-amino-acid chain: Ribonuclease Y (529 aa).

Residues 4 to 24 (GLIYISLEVLVACLITALVMY) form a helical membrane-spanning segment. The KH domain maps to 216 to 297 (LTTRIALPCS…NRIEEVYHRV (82 aa)). The HD domain maps to 342-435 (ALQHSKEVAL…VCAADALSAG (94 aa)).

Belongs to the RNase Y family.

It is found in the cell membrane. In terms of biological role, endoribonuclease that initiates mRNA decay. The sequence is that of Ribonuclease Y from Helicobacter pylori (strain ATCC 700392 / 26695) (Campylobacter pylori).